We begin with the raw amino-acid sequence, 321 residues long: tRNA U34 carboxymethyltransferase (321 aa).

Carboxy-S-adenosyl-L-methionine is bound by residues Lys-90, Trp-104, Lys-109, Gly-129, 151-153 (DPT), 180-181 (IE), Met-195, Tyr-199, and Arg-314.

It belongs to the class I-like SAM-binding methyltransferase superfamily. CmoB family. Homotetramer.

It carries out the reaction carboxy-S-adenosyl-L-methionine + 5-hydroxyuridine(34) in tRNA = 5-carboxymethoxyuridine(34) in tRNA + S-adenosyl-L-homocysteine + H(+). Functionally, catalyzes carboxymethyl transfer from carboxy-S-adenosyl-L-methionine (Cx-SAM) to 5-hydroxyuridine (ho5U) to form 5-carboxymethoxyuridine (cmo5U) at position 34 in tRNAs. In Histophilus somni (strain 129Pt) (Haemophilus somnus), this protein is tRNA U34 carboxymethyltransferase.